Reading from the N-terminus, the 80-residue chain is Serine palmitoyltransferase small subunit A (80 aa).

The Cytoplasmic segment spans residues 1–21; the sequence is MKVSCEDINGPRSSLSRAWNH. Residues 22 to 38 form a helical membrane-spanning segment; it reads MSWLYYQYLLVTALYML. At 39 to 43 the chain is on the lumenal side; the sequence is EPWER. A helical membrane pass occupies residues 44-66; sequence TIFNSMLVSIVGMALYTGYIFMP. Topologically, residues 67–80 are cytoplasmic; it reads QHILAILHYFEIVQ.

This sequence belongs to the SPTSS family. SPTSSA subfamily. As to quaternary structure, component of the serine palmitoyltransferase (SPT) complex, which is composed of SPTLC1, SPTLC2 or SPTLC3 and SPTSSA or SPTSSB. The heterodimer consisting of SPTLC1 and SPTLC2/SPTLC3 forms the catalytic core of the enzyme, while SPTSSA or SPTSSB subunits determine substrate specificity. SPT also interacts with ORMDL proteins, especially ORMDL3, which negatively regulate SPT activity in the presence of ceramides.

It is found in the endoplasmic reticulum membrane. It functions in the pathway lipid metabolism; sphingolipid metabolism. Functionally, component of the serine palmitoyltransferase multisubunit enzyme (SPT) that catalyzes the initial and rate-limiting step in sphingolipid biosynthesis by condensing L-serine and activated acyl-CoA (most commonly palmitoyl-CoA) to form long-chain bases. The SPT complex is composed of SPTLC1, SPTLC2 or SPTLC3 and SPTSSA or SPTSSB. Within this complex, the heterodimer consisting of SPTLC1 and SPTLC2/SPTLC3 forms the catalytic core. Within the SPT complex, SPTSSA stimulates the catalytic activity and plays a role in substrate specificity, which depends upon the overall complex composition. The SPTLC1-SPTLC2-SPTSSA complex shows a strong preference for C16-CoA substrate, while the SPTLC1-SPTLC3-SPTSSA isozyme uses both C14-CoA and C16-CoA as substrates, with a slight preference for C14-CoA. Independently of its action as a SPT component, may be involved in MBOAT7 localization to mitochondria-associated membranes, a membrane bridge between the endoplasmic reticulum and mitochondria, may hence affect MBOAT7-catalyzed incorporation of arachidonic acid into phosphatidylinositol. The chain is Serine palmitoyltransferase small subunit A (sptssa) from Xenopus tropicalis (Western clawed frog).